Here is a 270-residue protein sequence, read N- to C-terminus: Elongation factor Ts (270 aa).

The segment at 77 to 80 is involved in Mg(2+) ion dislocation from EF-Tu; sequence TDFV.

Belongs to the EF-Ts family.

It localises to the cytoplasm. Its function is as follows. Associates with the EF-Tu.GDP complex and induces the exchange of GDP to GTP. It remains bound to the aminoacyl-tRNA.EF-Tu.GTP complex up to the GTP hydrolysis stage on the ribosome. The chain is Elongation factor Ts from Nocardioides sp. (strain ATCC BAA-499 / JS614).